The chain runs to 341 residues: L-threonine 3-dehydrogenase (341 aa).

Cys38 is a Zn(2+) binding site. Catalysis depends on charge relay system residues Thr40 and His43. Zn(2+)-binding residues include His63, Glu64, Cys93, Cys96, Cys99, and Cys107. Residues Ile175, Asp195, Arg200, 262 to 264, and 286 to 287 each bind NAD(+); these read LGI and IY.

This sequence belongs to the zinc-containing alcohol dehydrogenase family. In terms of assembly, homotetramer. It depends on Zn(2+) as a cofactor.

It is found in the cytoplasm. It catalyses the reaction L-threonine + NAD(+) = (2S)-2-amino-3-oxobutanoate + NADH + H(+). It functions in the pathway amino-acid degradation; L-threonine degradation via oxydo-reductase pathway; glycine from L-threonine: step 1/2. Functionally, catalyzes the NAD(+)-dependent oxidation of L-threonine to 2-amino-3-ketobutyrate. This Shewanella putrefaciens (strain CN-32 / ATCC BAA-453) protein is L-threonine 3-dehydrogenase.